Consider the following 198-residue polypeptide: NAD(P)H dehydrogenase (quinone) (198 aa).

Residues 4–189 (ILVLYYSMYG…SIARYQGEYV (186 aa)) form the Flavodoxin-like domain. Residues 10–15 (SMYGHI) and 78–80 (TRF) contribute to the FMN site. Tyrosine 12 is a binding site for NAD(+). Tryptophan 98 serves as a coordination point for substrate. Residues 113 to 118 (STGTGG) and histidine 133 contribute to the FMN site.

The protein belongs to the WrbA family. The cofactor is FMN.

It carries out the reaction a quinone + NADH + H(+) = a quinol + NAD(+). It catalyses the reaction a quinone + NADPH + H(+) = a quinol + NADP(+). The polypeptide is NAD(P)H dehydrogenase (quinone) (Salmonella paratyphi C (strain RKS4594)).